The primary structure comprises 821 residues: E3 ubiquitin-protein ligase RSP5 (821 aa).

Residues 1–112 (MGSNLPAQPN…QMGGDEMLTR (112 aa)) form the C2 domain. 2 stretches are compositionally biased toward polar residues: residues 133 to 144 (TNLSTPNPNQAN) and 188 to 201 (LNPQ…RPTS). Disordered regions lie at residues 133–239 (TNLS…GWER) and 255–359 (RTTT…YFVD). Residues 202 to 217 (QIAPPNGAPPIANGQG) show a composition bias toward low complexity. The region spanning 231-264 (GRLPAGWERREDNLGRTYYVDHNTRTTTWNRPSA) is the WW 1 domain. Positions 255-272 (RTTTWNRPSANYNEQTQR) are enriched in polar residues. Positions 281–296 (LERRAHQNRMLPEDRT) are enriched in basic and acidic residues. Residues 297-312 (GASSPNLSETQPQAQT) show a composition bias toward polar residues. The span at 320–339 (ASNSNVVSMMATGATTAGTG) shows a compositional bias: low complexity. WW domains lie at 339-372 (GELP…DPRR) and 399-432 (GPLP…DPRL). The HECT domain occupies 488 to 821 (SASDLKKRLM…VEETLGFGQE (334 aa)). C789 acts as the Glycyl thioester intermediate in catalysis.

The protein belongs to the RSP5/NEDD4 family. As to quaternary structure, interacts with apyA and creD.

It localises to the cytoplasm. It carries out the reaction S-ubiquitinyl-[E2 ubiquitin-conjugating enzyme]-L-cysteine + [acceptor protein]-L-lysine = [E2 ubiquitin-conjugating enzyme]-L-cysteine + N(6)-ubiquitinyl-[acceptor protein]-L-lysine.. It participates in protein modification; protein ubiquitination. E3 ubiquitin-protein ligase which accepts ubiquitin from an E2 ubiquitin-conjugating enzyme in the form of a thioester and then directly transfers the ubiquitin to targeted substrates. Probably involved in the regulatory network controlling carbon source utilization. Ubiquitinates 'Lys-528' of the uric acid/xanthine transporter uapA at the cell membrane, leading to its internalization, sorting into the endosomal pathway to the vacuolar lumen where it is eventually degraded. The sequence is that of E3 ubiquitin-protein ligase RSP5 (hulA) from Emericella nidulans (strain FGSC A4 / ATCC 38163 / CBS 112.46 / NRRL 194 / M139) (Aspergillus nidulans).